We begin with the raw amino-acid sequence, 125 residues long: Small ribosomal subunit protein eS8 (125 aa).

The protein belongs to the eukaryotic ribosomal protein eS8 family. In terms of assembly, part of the 30S ribosomal subunit.

The polypeptide is Small ribosomal subunit protein eS8 (Methanosphaerula palustris (strain ATCC BAA-1556 / DSM 19958 / E1-9c)).